The following is a 401-amino-acid chain: Probable inactive purple acid phosphatase 14 (401 aa).

An N-terminal signal peptide occupies residues 1–30; the sequence is MEETRRRFVISSVLSVSLIYLCLSTCHVSA. Asn-79 carries an N-linked (GlcNAc...) asparagine glycan. Asn-197 contributes to the substrate binding site. Asn-197 lines the Zn(2+) pocket. Asn-246 carries N-linked (GlcNAc...) asparagine glycosylation. A Zn(2+)-binding site is contributed by His-256. An N-linked (GlcNAc...) asparagine glycan is attached at Asn-266. His-305 provides a ligand contact to Zn(2+). Residue 305–307 participates in substrate binding; that stretch reads HDH. His-307 provides a ligand contact to Fe cation. N-linked (GlcNAc...) asparagine glycosylation is found at Asn-371 and Asn-384.

The protein belongs to the metallophosphoesterase superfamily. Purple acid phosphatase family. In terms of assembly, homodimer. The cofactor is Fe cation. Zn(2+) is required as a cofactor. In terms of tissue distribution, specifically expressed in flowers.

Its subcellular location is the secreted. This Arabidopsis thaliana (Mouse-ear cress) protein is Probable inactive purple acid phosphatase 14 (PAP14).